The chain runs to 853 residues: EF-hand domain-containing family member B (853 aa).

Disordered regions lie at residues 1–31 (MCSF…TRAP) and 244–266 (AQQP…PGNI). EF-hand domains are found at residues 581-616 (QNFD…ANLH) and 617-652 (LDKM…KDRI). Positions 594, 598, 605, 630, 632, 634, and 641 each coordinate Ca(2+).

In terms of assembly, microtubule inner protein component of sperm flagellar doublet microtubules. Interacts with STIM1 and ORAI1; the interactions take place upon Ca(2+)-store depletion and dissociate through a Ca(2+)-dependent mechanism. Interaction with STIM1 inhibits STIM1 interaction with SARAF.

Its subcellular location is the cytoplasm. It is found in the cytoskeleton. The protein localises to the cilium axoneme. The protein resides in the flagellum axoneme. In terms of biological role, microtubule inner protein (MIP) part of the dynein-decorated doublet microtubules (DMTs) in cilia axoneme, which is required for motile cilia beating. Cytosolic sensor for calcium, modulates the interaction of STIM1 and ORAI1 upon store depletion and the activation of store-operated Ca(2+) entry (SOCE) and NFAT translocation from cytosol to nucleus. In Mus musculus (Mouse), this protein is EF-hand domain-containing family member B.